The following is a 148-amino-acid chain: MIRRRKKVRKLRGSHTHGWGCKKKHRGGGSKGGRGMAGTGKRKDQKWTWTIKYAPDRLGKRGFHRPKAVQYIPKVINLNDIDENFELFKDAGIIYEEDGKLVFDATALGVDKILGTGKLTRALVVKAYYVTPKAEEKIKAAGGEVLLA.

Basic residues predominate over residues M1 to G28. Residues M1–K43 form a disordered region. Positions G29–G38 are enriched in gly residues.

It belongs to the universal ribosomal protein uL15 family. As to quaternary structure, part of the 50S ribosomal subunit.

Its function is as follows. Binds to the 23S rRNA. In Thermococcus kodakarensis (strain ATCC BAA-918 / JCM 12380 / KOD1) (Pyrococcus kodakaraensis (strain KOD1)), this protein is Large ribosomal subunit protein uL15.